Consider the following 114-residue polypeptide: Protein vCCL3 (114 aa).

Residues 1-26 (MWSMCWVLRAHLGLLFWVAVIELCAA) form the signal peptide.

Functionally, acts as a highly selective agonist for human lymphoactin receptor XCR1. This chain is Protein vCCL3 (K4.1), found in Human herpesvirus 8 type P (isolate GK18) (HHV-8).